Consider the following 238-residue polypeptide: UPF0280 protein Mboo_1274 (238 aa).

The protein belongs to the UPF0280 family.

The sequence is that of UPF0280 protein Mboo_1274 from Methanoregula boonei (strain DSM 21154 / JCM 14090 / 6A8).